The following is a 293-amino-acid chain: MRQKEVLAKSFQGPAAVCRTPNSHVYMFNNGSGDSGDSSEEESHQVVLRPRGKEHQKNSSQRPGAGTMVLLQRELAQEDSLNKLALQYGCKVADIKKANNFIREQDLYALKSIKIPVRNHGILTETHQELMPLGASSSETRVTLVDLPEDEDAGGATTQGNQLTDFFKGIDENIERAVHSDVFHGDSCCVEAPDQLLLPITQKPVADGADCGIQWWNAVFLMLLIGIVLPVFYLVYFKIQATGEPSNGLNATVVPNGSMTLSPVPGQAPRLAIPVPTLPASDSQVSPTTQAGA.

The Extracellular portion of the chain corresponds to methionine 1 to glutamine 214. Residues phenylalanine 28–alanine 65 form a disordered region. An N-linked (GlcNAc...) asparagine glycan is attached at asparagine 30. The region spanning leucine 71–isoleucine 115 is the LysM domain. Residues tryptophan 215–valine 235 form a helical membrane-spanning segment. Residues tyrosine 236 to alanine 293 are Cytoplasmic-facing.

The protein localises to the membrane. The polypeptide is LysM and putative peptidoglycan-binding domain-containing protein 4 (Lysmd4) (Mus musculus (Mouse)).